Reading from the N-terminus, the 261-residue chain is Thiamine thiazole synthase (261 aa).

Residues A33, 52–53, G60, V124, and 152–154 each bind NAD(+); these read ER and HVD. Positions 154 and 169 each coordinate Fe cation. I219 lines the NAD(+) pocket. R229 is a glycine binding site.

This sequence belongs to the THI4 family. As to quaternary structure, homooctamer; tetramer of dimers. It depends on Fe(2+) as a cofactor.

It carries out the reaction hydrogen sulfide + glycine + NAD(+) = ADP-5-ethyl-4-methylthiazole-2-carboxylate + nicotinamide + 3 H2O + H(+). Its pathway is cofactor biosynthesis; thiamine diphosphate biosynthesis. Its function is as follows. Involved in the biosynthesis of the thiazole moiety of thiamine. Catalyzes the conversion of NAD and glycine to adenosine diphosphate 5-(2-hydroxyethyl)-4-methylthiazole-2-carboxylate (ADT), an adenylated thiazole intermediate, using free sulfide as a source of sulfur. The polypeptide is Thiamine thiazole synthase (Pyrobaculum aerophilum (strain ATCC 51768 / DSM 7523 / JCM 9630 / CIP 104966 / NBRC 100827 / IM2)).